A 469-amino-acid chain; its full sequence is 3-isopropylmalate dehydratase large subunit (469 aa).

Cys-350, Cys-410, and Cys-413 together coordinate [4Fe-4S] cluster.

It belongs to the aconitase/IPM isomerase family. LeuC type 1 subfamily. Heterodimer of LeuC and LeuD. It depends on [4Fe-4S] cluster as a cofactor.

It carries out the reaction (2R,3S)-3-isopropylmalate = (2S)-2-isopropylmalate. It participates in amino-acid biosynthesis; L-leucine biosynthesis; L-leucine from 3-methyl-2-oxobutanoate: step 2/4. Its function is as follows. Catalyzes the isomerization between 2-isopropylmalate and 3-isopropylmalate, via the formation of 2-isopropylmaleate. The protein is 3-isopropylmalate dehydratase large subunit of Rhizobium johnstonii (strain DSM 114642 / LMG 32736 / 3841) (Rhizobium leguminosarum bv. viciae).